The chain runs to 373 residues: tRNA (guanine(26)-N(2))-dimethyltransferase (373 aa).

The region spanning 2-365 (KIISEGETKL…AELSDLVVLI (364 aa)) is the Trm1 methyltransferase domain. S-adenosyl-L-methionine contacts are provided by Arg-35, Arg-66, Asp-86, Asp-113, and Ala-114.

Belongs to the class I-like SAM-binding methyltransferase superfamily. Trm1 family.

It carries out the reaction guanosine(26) in tRNA + 2 S-adenosyl-L-methionine = N(2)-dimethylguanosine(26) in tRNA + 2 S-adenosyl-L-homocysteine + 2 H(+). Its function is as follows. Dimethylates a single guanine residue at position 26 of a number of tRNAs using S-adenosyl-L-methionine as donor of the methyl groups. This chain is tRNA (guanine(26)-N(2))-dimethyltransferase, found in Methanococcus maripaludis (strain C6 / ATCC BAA-1332).